We begin with the raw amino-acid sequence, 226 residues long: MHIMEGFLPVEHAIGWSVASAPVVAYGLYSINKKINKNPEQRMLLGVAAAFTFVLSALKMPSVTGSCSHPTGTGLGAILFGPSAVAPIGAVVLLFQALLLAHGGLTTLGANIFSMAIVGPFAAAAVFRLARAARFPFGVGVFLAASLGDLLTYVTTACQLAFAFPDPVGGFTASLAKFAGVFALTQIPLAISEGLLTVVVMNALLRFNREELGSLNIEGNGQEVQA.

6 helical membrane passes run 6–26 (GFLP…VVAY), 43–63 (MLLG…MPSV), 75–95 (LGAI…VLLF), 107–127 (TLGA…AAVF), 135–155 (FPFG…TYVT), and 181–201 (VFAL…VVVM).

The protein belongs to the CbiM family. Forms an energy-coupling factor (ECF) transporter complex composed of an ATP-binding protein (A component, CbiO), a transmembrane protein (T component, CbiQ) and 2 possible substrate-capture proteins (S components, CbiM and CbiN) of unknown stoichimetry.

The protein resides in the cell inner membrane. It functions in the pathway cofactor biosynthesis; adenosylcobalamin biosynthesis. In terms of biological role, part of the energy-coupling factor (ECF) transporter complex CbiMNOQ involved in cobalt import. The sequence is that of Cobalt transport protein CbiM 1 (cbim1) from Pelobacter propionicus (strain DSM 2379 / NBRC 103807 / OttBd1).